The chain runs to 177 residues: Adenine phosphoribosyltransferase (177 aa).

This sequence belongs to the purine/pyrimidine phosphoribosyltransferase family. Homodimer.

It localises to the cytoplasm. It carries out the reaction AMP + diphosphate = 5-phospho-alpha-D-ribose 1-diphosphate + adenine. It functions in the pathway purine metabolism; AMP biosynthesis via salvage pathway; AMP from adenine: step 1/1. Functionally, catalyzes a salvage reaction resulting in the formation of AMP, that is energically less costly than de novo synthesis. The protein is Adenine phosphoribosyltransferase of Acidothermus cellulolyticus (strain ATCC 43068 / DSM 8971 / 11B).